The sequence spans 372 residues: Methylthioribose-1-phosphate isomerase 2 (372 aa).

Aspartate 254 (proton donor) is an active-site residue.

The protein belongs to the eIF-2B alpha/beta/delta subunits family. MtnA subfamily.

The protein resides in the cytoplasm. It localises to the nucleus. It catalyses the reaction 5-(methylsulfanyl)-alpha-D-ribose 1-phosphate = 5-(methylsulfanyl)-D-ribulose 1-phosphate. It functions in the pathway amino-acid biosynthesis; L-methionine biosynthesis via salvage pathway; L-methionine from S-methyl-5-thio-alpha-D-ribose 1-phosphate: step 1/6. In terms of biological role, catalyzes the interconversion of methylthioribose-1-phosphate (MTR-1-P) into methylthioribulose-1-phosphate (MTRu-1-P). This Trypanosoma cruzi (strain CL Brener) protein is Methylthioribose-1-phosphate isomerase 2.